The primary structure comprises 220 residues: Deoxyribose-phosphate aldolase (220 aa).

D89 functions as the Proton donor/acceptor in the catalytic mechanism. The active-site Schiff-base intermediate with acetaldehyde is K151. K180 functions as the Proton donor/acceptor in the catalytic mechanism.

Belongs to the DeoC/FbaB aldolase family. DeoC type 1 subfamily.

The protein localises to the cytoplasm. It carries out the reaction 2-deoxy-D-ribose 5-phosphate = D-glyceraldehyde 3-phosphate + acetaldehyde. It functions in the pathway carbohydrate degradation; 2-deoxy-D-ribose 1-phosphate degradation; D-glyceraldehyde 3-phosphate and acetaldehyde from 2-deoxy-alpha-D-ribose 1-phosphate: step 2/2. Its function is as follows. Catalyzes a reversible aldol reaction between acetaldehyde and D-glyceraldehyde 3-phosphate to generate 2-deoxy-D-ribose 5-phosphate. This Streptococcus suis (strain 05ZYH33) protein is Deoxyribose-phosphate aldolase.